The sequence spans 306 residues: Acetaldehyde dehydrogenase (306 aa).

The Acyl-thioester intermediate role is filled by C131. Residues 162-170 (SAGPGTRKN) and N273 contribute to the NAD(+) site.

It belongs to the acetaldehyde dehydrogenase family.

The enzyme catalyses acetaldehyde + NAD(+) + CoA = acetyl-CoA + NADH + H(+). The sequence is that of Acetaldehyde dehydrogenase from Albidiferax ferrireducens (strain ATCC BAA-621 / DSM 15236 / T118) (Rhodoferax ferrireducens).